Consider the following 573-residue polypeptide: MLO-like protein 2 (573 aa).

Over 1–15 the chain is Extracellular; sequence MADQVKERTLEETST. A helical transmembrane segment spans residues 16-36; sequence WAVAVVCFVLLFISIVLEHSI. At 37–61 the chain is on the cytoplasmic side; the sequence is HKIGTWFKKKHKQALFEALEKVKAE. Residues 62-82 form a helical membrane-spanning segment; sequence LMLLGFISLLLTIGQTPISNI. The Extracellular portion of the chain corresponds to 83–164; that stretch reads CISQKVASTM…VSAYGIHQLH (82 aa). A helical transmembrane segment spans residues 165–185; it reads IFIFVLAVVHVVYCIVTYAFG. Residues 186–287 lie on the Cytoplasmic side of the membrane; it reads KIKMRTWKSW…KYIQRSLEKD (102 aa). The helical transmembrane segment at 288 to 308 threads the bilayer; sequence FKTVVEISPVIWFVAVLFLLT. At 309 to 317 the chain is on the extracellular side; it reads NSYGLRSYL. A helical membrane pass occupies residues 318–338; that stretch reads WLPFIPLVVILIVGTKLEVII. Topologically, residues 339-371 are cytoplasmic; that stretch reads TKLGLRIQEKGDVVRGAPVVQPGDDLFWFGKPR. The helical transmembrane segment at 372 to 392 threads the bilayer; that stretch reads FILFLIHLVLFTNAFQLAFFA. The Extracellular segment spans residues 393–415; it reads WSTYEFNLNNCFHESTADVVIRL. The chain crosses the membrane as a helical span at residues 416-436; that stretch reads VVGAVVQILCSYVTLPLYALV. At 437–573 the chain is on the cytoplasmic side; the sequence is TQMGSKMKPT…KSLRDFSFKK (137 aa). Positions 450–471 are calmodulin-binding; the sequence is DRVATALKKWHHTAKNETKHGR. The segment at 462 to 573 is disordered; it reads TAKNETKHGR…KSLRDFSFKK (112 aa). Composition is skewed to polar residues over residues 473 to 490 and 498 to 513; these read SGSNTPFSSRPTTPTHGS and NFNNRSVENYPSSPSP. Ser512 carries the phosphoserine modification. A compositionally biased stretch (basic and acidic residues) spans 522 to 548; sequence EHQFWDPESQHQEAETSTHHSLAHESS.

Belongs to the MLO family.

It localises to the membrane. May be involved in modulation of pathogen defense and leaf cell death. Activity seems to be regulated by Ca(2+)-dependent calmodulin binding and seems not to require heterotrimeric G proteins. The protein is MLO-like protein 2 (MLO2) of Arabidopsis thaliana (Mouse-ear cress).